Here is a 196-residue protein sequence, read N- to C-terminus: Carnitine operon protein CaiE (196 aa).

The segment at 173–196 is disordered; it reads TQPLRQMEENRPRLQGTTDVTPKR. Residues 187–196 show a composition bias toward polar residues; that stretch reads QGTTDVTPKR.

This sequence belongs to the transferase hexapeptide repeat family.

The protein operates within amine and polyamine metabolism; carnitine metabolism. In terms of biological role, overproduction of CaiE stimulates the activity of CaiB and CaiD. This chain is Carnitine operon protein CaiE, found in Escherichia coli O127:H6 (strain E2348/69 / EPEC).